A 646-amino-acid polypeptide reads, in one-letter code: Lipoteichoic acid synthase (646 aa).

The Cytoplasmic segment spans residues 1 to 7 (MSSQKKK). The chain crosses the membrane as a helical span at residues 8-28 (ISLFAFFLLTVITITLKTYFS). The Extracellular segment spans residues 29–43 (YYVDFSLGVKGLVQN). Residues 44 to 64 (LILLMNPYSLVALVLSVFLFF) form a helical membrane-spanning segment. The Cytoplasmic portion of the chain corresponds to 65–68 (KGKK). Residues 69–89 (AFWFMFIGGFLLTFLLYANVV) traverse the membrane as a helical segment. Residues 90 to 119 (YFRFFSDFLTFSTLNQVGNVESMGGAVSAS) are Extracellular-facing. Residues 120–140 (FKWYDFVYFIDTLVYLFILIF) form a helical membrane-spanning segment. Residues 141-153 (KTKWLDTKAFSKK) lie on the Cytoplasmic side of the membrane. The helical transmembrane segment at 154–174 (FVPVVMAASVALFFLNLAFAE) threads the bilayer. At 175–646 (TDRPELLTRT…ETGPKANSKK (472 aa)) the chain is on the extracellular side. Positions 255 and 300 each coordinate Mn(2+). The active site involves Thr300. Position 416 (His416) interacts with substrate. Positions 475 and 476 each coordinate Mn(2+). Positions 623–638 (NPDFKKVNPSKYKYET) are enriched in basic and acidic residues. The interval 623–646 (NPDFKKVNPSKYKYETGPKANSKK) is disordered.

Belongs to the LTA synthase family. Proteolytically cleaved.

The protein resides in the cell membrane. It is found in the secreted. The protein operates within cell wall biogenesis; lipoteichoic acid biosynthesis. Catalyzes the polymerization of lipoteichoic acid (LTA) polyglycerol phosphate, a reaction that presumably uses phosphatidylglycerol (PG) as substrate. Is required for staphylococcal growth and cell division process. In Staphylococcus aureus (strain USA300), this protein is Lipoteichoic acid synthase (ltaS).